A 331-amino-acid polypeptide reads, in one-letter code: Undecaprenyl-phosphate 4-deoxy-4-formamido-L-arabinose transferase (331 aa).

A run of 2 helical transmembrane segments spans residues 236 to 256 (LSIVGGGIASFGILFGLFLIL) and 270 to 290 (VFPLFSILFIFIGAQFVGLGL).

It belongs to the glycosyltransferase 2 family.

It localises to the cell inner membrane. It catalyses the reaction UDP-4-deoxy-4-formamido-beta-L-arabinose + di-trans,octa-cis-undecaprenyl phosphate = 4-deoxy-4-formamido-alpha-L-arabinopyranosyl di-trans,octa-cis-undecaprenyl phosphate + UDP. The protein operates within glycolipid biosynthesis; 4-amino-4-deoxy-alpha-L-arabinose undecaprenyl phosphate biosynthesis; 4-amino-4-deoxy-alpha-L-arabinose undecaprenyl phosphate from UDP-4-deoxy-4-formamido-beta-L-arabinose and undecaprenyl phosphate: step 1/2. It functions in the pathway bacterial outer membrane biogenesis; lipopolysaccharide biosynthesis. Its function is as follows. Catalyzes the transfer of 4-deoxy-4-formamido-L-arabinose from UDP to undecaprenyl phosphate. The modified arabinose is attached to lipid A and is required for resistance to polymyxin and cationic antimicrobial peptides. The sequence is that of Undecaprenyl-phosphate 4-deoxy-4-formamido-L-arabinose transferase from Shewanella sediminis (strain HAW-EB3).